We begin with the raw amino-acid sequence, 288 residues long: Eukaryotic translation initiation factor 3 subunit G (288 aa).

Disordered stretches follow at residues 1-33 (MSKLGNRADWADDEEFDDPSALPPQQITTNKDG) and 156-197 (DEPT…GGER). Residues 208 to 286 (ATLRVTNVSE…LILRVEFAKR (79 aa)) enclose the RRM domain.

This sequence belongs to the eIF-3 subunit G family. As to quaternary structure, component of the eukaryotic translation initiation factor 3 (eIF-3) complex.

The protein localises to the cytoplasm. Its function is as follows. RNA-binding component of the eukaryotic translation initiation factor 3 (eIF-3) complex, which is involved in protein synthesis of a specialized repertoire of mRNAs and, together with other initiation factors, stimulates binding of mRNA and methionyl-tRNAi to the 40S ribosome. The eIF-3 complex specifically targets and initiates translation of a subset of mRNAs involved in cell proliferation. This subunit can bind 18S rRNA. The chain is Eukaryotic translation initiation factor 3 subunit G (tif35) from Aspergillus niger (strain ATCC MYA-4892 / CBS 513.88 / FGSC A1513).